The sequence spans 215 residues: Urease accessory protein UreG (215 aa).

11–18 is a binding site for GTP; that stretch reads GPVGAGKS.

Belongs to the SIMIBI class G3E GTPase family. UreG subfamily. As to quaternary structure, homodimer. UreD, UreF and UreG form a complex that acts as a GTP-hydrolysis-dependent molecular chaperone, activating the urease apoprotein by helping to assemble the nickel containing metallocenter of UreC. The UreE protein probably delivers the nickel.

It is found in the cytoplasm. Its function is as follows. Facilitates the functional incorporation of the urease nickel metallocenter. This process requires GTP hydrolysis, probably effectuated by UreG. The sequence is that of Urease accessory protein UreG from Cenarchaeum symbiosum (strain A).